The primary structure comprises 101 residues: Large ribosomal subunit protein uL24 (101 aa).

Belongs to the universal ribosomal protein uL24 family. As to quaternary structure, part of the 50S ribosomal subunit.

In terms of biological role, one of two assembly initiator proteins, it binds directly to the 5'-end of the 23S rRNA, where it nucleates assembly of the 50S subunit. Functionally, one of the proteins that surrounds the polypeptide exit tunnel on the outside of the subunit. The polypeptide is Large ribosomal subunit protein uL24 (Streptococcus suis (strain 98HAH33)).